The following is a 106-amino-acid chain: Large ribosomal subunit protein uL24 (106 aa).

Belongs to the universal ribosomal protein uL24 family. In terms of assembly, part of the 50S ribosomal subunit.

Functionally, one of two assembly initiator proteins, it binds directly to the 5'-end of the 23S rRNA, where it nucleates assembly of the 50S subunit. In terms of biological role, one of the proteins that surrounds the polypeptide exit tunnel on the outside of the subunit. The chain is Large ribosomal subunit protein uL24 from Blochmanniella pennsylvanica (strain BPEN).